Consider the following 179-residue polypeptide: Large ribosomal subunit protein uL5 (179 aa).

The protein belongs to the universal ribosomal protein uL5 family. Part of the 50S ribosomal subunit; part of the 5S rRNA/L5/L18/L25 subcomplex. Contacts the 5S rRNA and the P site tRNA. Forms a bridge to the 30S subunit in the 70S ribosome.

Functionally, this is one of the proteins that bind and probably mediate the attachment of the 5S RNA into the large ribosomal subunit, where it forms part of the central protuberance. In the 70S ribosome it contacts protein S13 of the 30S subunit (bridge B1b), connecting the 2 subunits; this bridge is implicated in subunit movement. Contacts the P site tRNA; the 5S rRNA and some of its associated proteins might help stabilize positioning of ribosome-bound tRNAs. In Methylococcus capsulatus (strain ATCC 33009 / NCIMB 11132 / Bath), this protein is Large ribosomal subunit protein uL5.